The sequence spans 63 residues: Large ribosomal subunit protein uL29 (63 aa).

Belongs to the universal ribosomal protein uL29 family.

This is Large ribosomal subunit protein uL29 from Photobacterium profundum (strain SS9).